Consider the following 132-residue polypeptide: Interleukin-5 (132 aa).

An N-terminal signal peptide occupies residues 1–17 (MRLPLQLSILTLAWVWA). N-linked (GlcNAc...) asparagine glycans are attached at residues Asn-45, Asn-74, and Asn-88.

The protein belongs to the IL-5 family. Homodimer; disulfide-linked. Interacts with IL5RA. Interacts with CSF2RB.

It localises to the secreted. Its function is as follows. Homodimeric cytokine expressed predominantly by T-lymphocytes and NK cells that plays an important role in the survival, differentiation, and chemotaxis of eosinophils. Also acts on activated and resting B-cells to induce immunoglobulin production, growth, and differentiation. Mechanistically, exerts its biological effects through a receptor composed of IL5RA subunit and the cytokine receptor common subunit beta/CSF2RB. Binding to the receptor leads to activation of various kinases including LYN, SYK and JAK2 and thereby propagates signals through the RAS-MAPK and JAK-STAT5 pathways respectively. This Meriones unguiculatus (Mongolian jird) protein is Interleukin-5 (IL5).